The following is a 148-amino-acid chain: Protein RESISTANCE TO POWDERY MILDEW 8.1 (148 aa).

The region spanning 1-148 (MPIGELAIGA…VISACSKIRA (148 aa)) is the RPW8 domain. A helical transmembrane segment spans residues 7–23 (AIGAVLGVGAQAIYDRF). Residues 120-140 (DDIKEIKAKISEMDTKLAEVI) are a coiled coil.

Belongs to the plant RPW8 protein family.

The protein resides in the membrane. Functionally, disease resistance (R) protein that induces localized, salicylic acid-dependent defenses. Confers resistance to powdery mildew (e.g. Erysiphe cichoracearum UCSC1). The polypeptide is Protein RESISTANCE TO POWDERY MILDEW 8.1 (Arabidopsis thaliana (Mouse-ear cress)).